A 100-amino-acid chain; its full sequence is Putative PIN1-like protein (100 aa).

Positions 1–15 are enriched in basic and acidic residues; the sequence is MADEEKLPPGWEKRM. 2 disordered regions span residues 1–52 and 69–100; these read MADE…QGEP and LDLA…REGL. The WW domain occupies 5–38; the sequence is EKLPPGWEKRMSRPSGRGYYFNHITNPSQWERPS. Positions 27-44 are enriched in polar residues; the sequence is HITNPSQWERPSGNSSSG. The segment covering 87–100 has biased composition (basic and acidic residues); sequence QRLHPEDQGRREGL.

The polypeptide is Putative PIN1-like protein (PIN1P1) (Homo sapiens (Human)).